The chain runs to 144 residues: Thyrostimulin alpha-2 subunit (144 aa).

The first 41 residues, 1 to 41, serve as a signal peptide directing secretion; sequence MGRRDSGRAVAQRYRGVTRGVTVIACLMVVCACVGLCDATG. Intrachain disulfides connect cysteine 52–cysteine 107, cysteine 66–cysteine 121, cysteine 76–cysteine 136, and cysteine 80–cysteine 138.

It belongs to the glycoprotein hormones subunit alpha family. Heterodimer with GPHB5; non-covalently-linked. In terms of tissue distribution, expressed by the venom duct.

The protein localises to the secreted. The protein is Thyrostimulin alpha-2 subunit of Conus victoriae (Queen Victoria cone).